The sequence spans 447 residues: Methylenetetrahydrofolate--tRNA-(uracil-5-)-methyltransferase TrmFO (447 aa).

Position 9–14 (9–14 (GGGLAG)) interacts with FAD.

It belongs to the MnmG family. TrmFO subfamily. Requires FAD as cofactor.

It is found in the cytoplasm. The enzyme catalyses uridine(54) in tRNA + (6R)-5,10-methylene-5,6,7,8-tetrahydrofolate + NADH + H(+) = 5-methyluridine(54) in tRNA + (6S)-5,6,7,8-tetrahydrofolate + NAD(+). It carries out the reaction uridine(54) in tRNA + (6R)-5,10-methylene-5,6,7,8-tetrahydrofolate + NADPH + H(+) = 5-methyluridine(54) in tRNA + (6S)-5,6,7,8-tetrahydrofolate + NADP(+). Catalyzes the folate-dependent formation of 5-methyl-uridine at position 54 (M-5-U54) in all tRNAs. The sequence is that of Methylenetetrahydrofolate--tRNA-(uracil-5-)-methyltransferase TrmFO from Paramagnetospirillum magneticum (strain ATCC 700264 / AMB-1) (Magnetospirillum magneticum).